Reading from the N-terminus, the 222-residue chain is MTDNNNGEIVEDKDNEKLKGEDNINNHISNHNNTEETSFEDPELEEMKKRFREMEEEAKKLTELQNNLESNITGNNGVGIGGNIGGGGGLMNTDQEEIDSRSVYVGNVDYKSTHDQILAYFQSCGTVNRITILSDKTTGHPKGCCYVEFVNKESIINAMALNDSFFNERQLKITPKRTNLPYYMRQGVLPPGRGGFRGGRGRGGIRGGIRGGRGRGNFYQPY.

Positions 1-43 are disordered; sequence MTDNNNGEIVEDKDNEKLKGEDNINNHISNHNNTEETSFEDPE. Residues 10–24 show a composition bias toward basic and acidic residues; it reads VEDKDNEKLKGEDNI. The RRM domain occupies 101 to 178; sequence RSVYVGNVDY…RQLKITPKRT (78 aa).

The protein localises to the nucleus. Involved in the 3'-end formation of mRNA precursors (pre-mRNA) by the addition of a poly(A) tail of 200-250 nt to the upstream cleavage product. In Dictyostelium discoideum (Social amoeba), this protein is Polyadenylate-binding protein 2 (pabpn1).